The sequence spans 185 residues: 3-hydroxyanthranilate 3,4-dioxygenase (185 aa).

O2 is bound at residue R44. The Fe cation site is built by H48, E54, and H95. A substrate-binding site is contributed by E54. Residues R99 and E109 each contribute to the substrate site. A divalent metal cation contacts are provided by C124, C127, C161, and C164.

Belongs to the 3-HAO family. Requires Fe(2+) as cofactor.

It is found in the cytoplasm. The catalysed reaction is 3-hydroxyanthranilate + O2 = (2Z,4Z)-2-amino-3-carboxymuconate 6-semialdehyde. It functions in the pathway cofactor biosynthesis; NAD(+) biosynthesis; quinolinate from L-kynurenine: step 3/3. Functionally, catalyzes the oxidative ring opening of 3-hydroxyanthranilate to 2-amino-3-carboxymuconate semialdehyde, which spontaneously cyclizes to quinolinate. In Podospora anserina (strain S / ATCC MYA-4624 / DSM 980 / FGSC 10383) (Pleurage anserina), this protein is 3-hydroxyanthranilate 3,4-dioxygenase.